We begin with the raw amino-acid sequence, 154 residues long: Putative glutamine amidotransferase-like protein RP712 (154 aa).

The Glutamine amidotransferase type-1 domain maps to 1–94; sequence MSIEKEKFWA…QQSVWSFHNK (94 aa).

The polypeptide is Putative glutamine amidotransferase-like protein RP712 (Rickettsia prowazekii (strain Madrid E)).